Consider the following 704-residue polypeptide: Elongation factor G (704 aa).

In terms of domain architecture, tr-type G spans 8–290 (ARYRNIGISA…AVIEYLPAPT (283 aa)). Residues 17–24 (AHIDAGKT), 88–92 (DTPGH), and 142–145 (NKMD) each bind GTP.

The protein belongs to the TRAFAC class translation factor GTPase superfamily. Classic translation factor GTPase family. EF-G/EF-2 subfamily.

The protein localises to the cytoplasm. In terms of biological role, catalyzes the GTP-dependent ribosomal translocation step during translation elongation. During this step, the ribosome changes from the pre-translocational (PRE) to the post-translocational (POST) state as the newly formed A-site-bound peptidyl-tRNA and P-site-bound deacylated tRNA move to the P and E sites, respectively. Catalyzes the coordinated movement of the two tRNA molecules, the mRNA and conformational changes in the ribosome. The sequence is that of Elongation factor G from Proteus mirabilis (strain HI4320).